We begin with the raw amino-acid sequence, 2365 residues long: Voltage-dependent T-type calcium channel subunit alpha-1H (2365 aa).

The interval 1–63 is disordered; the sequence is MTEGTLAADE…PGTECGADLG (63 aa). Residues 1–100 lie on the Cytoplasmic side of the membrane; that stretch reads MTEGTLAADE…SWCLRLVSRR (100 aa). Over residues 16–36 the composition is skewed to low complexity; sequence GASPSAPAAPVRASPASPGVP. The I repeat unit spans residues 87–422; it reads TRPRSWCLRL…LCLVVIATQF (336 aa). The helical transmembrane segment at 101 to 119 threads the bilayer; the sequence is WFEHISMLVIMLNCVTLGM. Residues 120–141 are Extracellular-facing; it reads FRPCEDVECRSERCSILEAFDD. Aspartate 140 is a binding site for Zn(2+). The chain crosses the membrane as a helical span at residues 142–160; that stretch reads FIFAFFAVEMVIKMVALGL. Residues 161 to 169 lie on the Cytoplasmic side of the membrane; the sequence is FGQKCYLGD. A helical membrane pass occupies residues 170-184; sequence TWNRLDFFIVMAGMM. Residues 185–193 lie on the Extracellular side of the membrane; it reads EYSLDGHNV. Zn(2+) contacts are provided by aspartate 189 and histidine 191. Asparagine 192 carries an N-linked (GlcNAc...) asparagine glycan. The chain crosses the membrane as a helical span at residues 194 to 212; the sequence is SLSAIRTVRVLRPLRAINR. Over 213–232 the chain is Cytoplasmic; sequence VPSMRILVTLLLDTLPMLGN. Residues 233–253 form a helical membrane-spanning segment; sequence VLLLCFFVFFIFGIVGVQLWA. The Extracellular portion of the chain corresponds to 254 to 394; it reads GLLRNRCFLD…YYVMDAHSFY (141 aa). Asparagine 271 is a glycosylation site (N-linked (GlcNAc...) asparagine). The chain crosses the membrane as a helical span at residues 395 to 419; the sequence is NFIYFILLIIVGSFFMINLCLVVIA. The Cytoplasmic segment spans residues 420-790; that stretch reads TQFSETKQRE…SKLRRIVDSK (371 aa). 3 disordered regions span residues 490 to 573, 618 to 656, and 737 to 761; these read VDPS…SESV, PSGA…SPSP, and GDCR…RWRP. Residues 500-532 show a composition bias toward basic residues; the sequence is GPRRRPRRAGRRTASVHHLVYHHHHHHHHHYHF. Residues 557–566 are compositionally biased toward pro residues; it reads PPSPPSPGHG. Residues 621–631 show a composition bias toward polar residues; it reads AVNSKGSTSSR. One copy of the II repeat lies at 776–1015; the sequence is WASFSSKLRR…LLVAILVEGF (240 aa). The chain crosses the membrane as a helical span at residues 791 to 811; it reads YFNRGIMAAILVNTLSMGVEY. At 812–824 the chain is on the extracellular side; it reads HEQPDELTNALEI. A helical membrane pass occupies residues 825-846; the sequence is SNIVFTSMFALEMLLKLLACGP. Residues 847–852 lie on the Cytoplasmic side of the membrane; sequence LGYIRN. Residues 853–871 traverse the membrane as a helical segment; that stretch reads PYNIFDGIVVIISVWEIVG. Residues 872-879 are Extracellular-facing; that stretch reads QADGGLSV. The chain crosses the membrane as a helical span at residues 880 to 903; it reads LRTFRLLRVLKLVRFLPALRRQLV. Over 904–914 the chain is Cytoplasmic; it reads VLMRTMDNVAT. Residues 915–935 traverse the membrane as a helical segment; that stretch reads FCMLLMLFIFIFSILGMHLFG. Over 936-987 the chain is Extracellular; it reads CKFSLKTDSGDTVPDRKNFDSLLWAIVTVFQILTQEDWNVVLYNGMASTSSW. Residues 988 to 1012 traverse the membrane as a helical segment; the sequence is AALYFVALMTFGNYVLFNLLVAILV. Over 1013 to 1301 the chain is Cytoplasmic; that stretch reads EGFQAEGDAT…NRLRVSCQKV (289 aa). Residues 1059–1215 are disordered; it reads PNGHLEGRGS…HRSTMDLCPP (157 aa). Residues 1130–1147 are compositionally biased toward low complexity; that stretch reads GPNSAGSSRRSSWNSLGR. The span at 1199-1209 shows a compositional bias: basic and acidic residues; sequence RRAESLGHRST. The III repeat unit spans residues 1292-1569; it reads NRLRVSCQKV…MFVGVVVENF (278 aa). Residues 1302–1324 form a helical membrane-spanning segment; sequence IAHKMFDHVVLVFIFLNCITIAL. Residues 1325–1342 are Extracellular-facing; the sequence is ERPDIDPGSTERAFLSVS. The chain crosses the membrane as a helical span at residues 1343–1363; it reads NYIFTAIFVVEMMVKVVALGL. At 1364–1373 the chain is on the cytoplasmic side; the sequence is LWGEHAYLQS. Residues 1374–1393 traverse the membrane as a helical segment; the sequence is SWNVLDGLLVLVSLVDIIVA. At 1394–1407 the chain is on the extracellular side; that stretch reads VASAGGAKILGVLR. The helical transmembrane segment at 1408–1429 threads the bilayer; sequence VLRLLRTLRPLRVISRAPGLKL. Topologically, residues 1430 to 1439 are cytoplasmic; it reads VVETLISSLR. A helical transmembrane segment spans residues 1440–1463; that stretch reads PIGNIVLICCAFFIIFGILGVQLF. At 1464–1540 the chain is on the extracellular side; it reads KGKFYYCEGT…DQQPVQNHNP (77 aa). A glycan (N-linked (GlcNAc...) asparagine) is linked at asparagine 1477. The chain crosses the membrane as a helical span at residues 1541-1566; the sequence is WMLLYFISFLLIVSFFVLNMFVGVVV. Over 1567-1627 the chain is Cytoplasmic; the sequence is ENFHKCRQHQ…RRSIHSLCTS (61 aa). An IV repeat occupies 1613-1874; it reads DYSHTRRSIH…VVVAVLMKHL (262 aa). The helical transmembrane segment at 1628 to 1648 threads the bilayer; sequence HYLDLFITFIICLNVITMSME. Over 1649-1662 the chain is Extracellular; that stretch reads HYNQPKSLDEALKY. Residues 1663-1684 form a helical membrane-spanning segment; sequence CNYVFTIVFVFEAALKLVAFGF. Over 1685-1691 the chain is Cytoplasmic; it reads RRFFKDR. A helical transmembrane segment spans residues 1692–1710; sequence WNQLDLAIVLLSIMGIALE. At 1711 to 1724 the chain is on the extracellular side; sequence EIEMNAALPINPTI. A helical transmembrane segment spans residues 1725–1748; that stretch reads IRIMRVLRIARVLKLLKMATGMRA. Over 1749–1762 the chain is Cytoplasmic; it reads LLDTVVQALPQVGN. The helical transmembrane segment at 1763-1783 threads the bilayer; it reads LGLLFMLLFFIYAALGVELFG. Topologically, residues 1784 to 1846 are extracellular; the sequence is RLECSEDNPC…KHCLSYLPAL (63 aa). The helical transmembrane segment at 1847-1874 threads the bilayer; that stretch reads SPVYFVTFVLVAQFVLVNVVVAVLMKHL. Residues 1875 to 2365 are Cytoplasmic-facing; sequence EESNKEARED…APDDSGDEPV (491 aa). 2 stretches are compositionally biased toward polar residues: residues 1897–1916 and 1967–1983; these read QGST…TEPD and VTSA…SFQV. Disordered regions lie at residues 1897 to 1920, 1967 to 1999, 2053 to 2264, and 2321 to 2365; these read QGST…TPNL, VTSA…PLCA, APLG…GERW, and ELSM…DEPV. Positions 2092–2102 are enriched in acidic residues; it reads DDAEAADPADE. Positions 2172–2187 are enriched in basic and acidic residues; that stretch reads GDGHLESGEVRARASE.

This sequence belongs to the calcium channel alpha-1 subunit (TC 1.A.1.11) family. CACNA1H subfamily. In terms of assembly, interacts (via N-terminal cytoplasmic domain) with STAC. Post-translationally, in response to raising of intracellular calcium, the T-type channels are activated by CaM-kinase II. In terms of tissue distribution, is highly expressed in lumbosacral and thoracolumbar dorsal root ganglion neurons.

Its subcellular location is the cell membrane. The catalysed reaction is Ca(2+)(in) = Ca(2+)(out). Its function is as follows. Voltage-sensitive calcium channel that gives rise to T-type calcium currents. T-type calcium channels belong to the 'low-voltage activated (LVA)' group. A particularity of this type of channel is an opening at quite negative potentials, and a voltage-dependent inactivation. T-type channels serve pacemaking functions in both central neurons and cardiac nodal cells and support calcium signaling in secretory cells and vascular smooth muscle. They may also be involved in the modulation of firing patterns of neurons. In the adrenal zona glomerulosa, participates in the signaling pathway leading to aldosterone production in response to either AGT/angiotensin II, or hyperkalemia. The polypeptide is Voltage-dependent T-type calcium channel subunit alpha-1H (Cacna1h) (Mus musculus (Mouse)).